The primary structure comprises 490 residues: Histone-lysine N-methyltransferase SMYD1 (490 aa).

Residues 7–253 enclose the SET domain; sequence ENVEVFTAEG…EGEELTVSYI (247 aa). 17-19 serves as a coordination point for S-adenosyl-L-methionine; it reads KGR. Positions 52, 55, 65, 68, 74, 78, 86, and 90 each coordinate Zn(2+). The MYND-type zinc-finger motif lies at 52–90; sequence CHTCFKRQEKLHRCGQCKFAHYCDRTCQKDAWLNHKNEC. S-adenosyl-L-methionine contacts are provided by residues His135 and 205-206; that span reads NH. Residue Cys208 participates in Zn(2+) binding. 270–272 serves as a coordination point for S-adenosyl-L-methionine; it reads YYF. Residues Cys274, Cys276, and Cys279 each contribute to the Zn(2+) site.

Belongs to the class V-like SAM-binding methyltransferase superfamily. Interacts with HDAC1, HDAC2 and HDAC3. Interacts (via MYND-type zinc finger) with NACA isoform skNAC. In terms of tissue distribution, expression seems mostly restricted to heart and skeletal muscle.

It is found in the cytoplasm. The protein localises to the nucleus. The catalysed reaction is L-lysyl(4)-[histone H3] + 3 S-adenosyl-L-methionine = N(6),N(6),N(6)-trimethyl-L-lysyl(4)-[histone H3] + 3 S-adenosyl-L-homocysteine + 3 H(+). In terms of biological role, methylates histone H3 at 'Lys-4' (H3K4me), seems able to perform both mono-, di-, and trimethylation. Acts as a transcriptional repressor. Essential for cardiomyocyte differentiation and cardiac morphogenesis. The polypeptide is Histone-lysine N-methyltransferase SMYD1 (SMYD1) (Homo sapiens (Human)).